We begin with the raw amino-acid sequence, 70 residues long: DNA gyrase inhibitor YacG (70 aa).

The Zn(2+) site is built by Cys9, Cys12, Cys28, and Cys32. The tract at residues 44 to 70 (SRKIPGSSIDPESIVTTNNKQDNVDEQ) is disordered.

The protein belongs to the DNA gyrase inhibitor YacG family. In terms of assembly, interacts with GyrB. Zn(2+) is required as a cofactor.

In terms of biological role, inhibits all the catalytic activities of DNA gyrase by preventing its interaction with DNA. Acts by binding directly to the C-terminal domain of GyrB, which probably disrupts DNA binding by the gyrase. This Legionella pneumophila subsp. pneumophila (strain Philadelphia 1 / ATCC 33152 / DSM 7513) protein is DNA gyrase inhibitor YacG.